A 58-amino-acid chain; its full sequence is MTGSGTPPSREVNTYYMTMTMTMTMIMIMTMTMNIHFNNNNNNNINMNSRRMYLFILM.

Its subcellular location is the mitochondrion. This is an uncharacterized protein from Saccharomyces cerevisiae (strain ATCC 204508 / S288c) (Baker's yeast).